The following is a 127-amino-acid chain: MRAVAKYVRISPRKARLVADQIRGKSYPEAASILRFTNKRAARILGDVLKSAAANAENNHDADPELLFVEEVRVDEGPTIKRYRPRALGRATMIRKRTSHITLRLGAPEGVPVGGAVDTPGDEEEEE.

The span at 106 to 117 (GAPEGVPVGGAV) shows a compositional bias: low complexity. The interval 106-127 (GAPEGVPVGGAVDTPGDEEEEE) is disordered.

This sequence belongs to the universal ribosomal protein uL22 family. As to quaternary structure, part of the 50S ribosomal subunit.

In terms of biological role, this protein binds specifically to 23S rRNA; its binding is stimulated by other ribosomal proteins, e.g. L4, L17, and L20. It is important during the early stages of 50S assembly. It makes multiple contacts with different domains of the 23S rRNA in the assembled 50S subunit and ribosome. Its function is as follows. The globular domain of the protein is located near the polypeptide exit tunnel on the outside of the subunit, while an extended beta-hairpin is found that lines the wall of the exit tunnel in the center of the 70S ribosome. The protein is Large ribosomal subunit protein uL22 of Rubrobacter xylanophilus (strain DSM 9941 / JCM 11954 / NBRC 16129 / PRD-1).